The chain runs to 89 residues: Small ribosomal subunit protein uS19 (89 aa).

This sequence belongs to the universal ribosomal protein uS19 family.

Protein S19 forms a complex with S13 that binds strongly to the 16S ribosomal RNA. The sequence is that of Small ribosomal subunit protein uS19 from Xylella fastidiosa (strain M12).